Here is a 420-residue protein sequence, read N- to C-terminus: Nucleobindin-2 (420 aa).

Positions 1 to 24 (MRWRIIQVQYCFLLVPCMLTALEA) are cleaved as a signal peptide. A DNA-binding region spans residues 171 to 223 (RTRHEEFKKYEMMKEHERREYLKTLSEEKRKEEESKFEEMKRKHEDHPKVNHP). The interval 193–225 (KTLSEEKRKEEESKFEEMKRKHEDHPKVNHPGS) is disordered. The tract at residues 213–420 (KHEDHPKVNH…AGELKFEPHT (208 aa)) is binds to necdin. 2 consecutive EF-hand domains span residues 241–276 (PNDFDPKTFFKLHDVNNDGFLDEQELEALFTRELEK) and 293–328 (ERLRMREHVMSEIDNNKDRLVTLEEFLRATEKKEFL). Residues D254, N256, D258, E265, D306, N308, D310, and E317 each contribute to the Ca(2+) site. The GBA motif lies at 304–334 (EIDNNKDRLVTLEEFLRATEKKEFLEPDSWE). A Phosphoserine modification is found at S332. Residues 365-389 (AEELQKQKEDLQRQHDHLEAQKQEY) show a composition bias toward basic and acidic residues. Residues 365–420 (AEELQKQKEDLQRQHDHLEAQKQEYHQAVQHLEQKKLQQGIAPSGPAGELKFEPHT) form a disordered region.

This sequence belongs to the nucleobindin family. Interacts (via GBA motif) with guanine nucleotide-binding protein G(i) alpha subunit GNAI3. Preferentially interacts with inactive rather than active GNAI3. Interaction with GNAI3 is inhibited when NUCB2 binds calcium, probably due to a conformational change which renders the GBA motif inaccessible. Binds to the postmitotic growth suppressor NDN; coexpression abolishes NUCB2 secretion. Interacts with MC4R. In terms of tissue distribution, found in liver, heart, thymus, muscle, intestine, kidney, lung, spleen and throughout the brain, in cerebral cortex, hippocampus, hypothalamus and medulla oblongata. Nucb2 and necdin levels were higher in postmitotic neurons.

The protein localises to the cytoplasm. Its subcellular location is the perikaryon. It localises to the endoplasmic reticulum. It is found in the golgi apparatus. The protein resides in the nucleus envelope. The protein localises to the membrane. Its subcellular location is the secreted. In terms of biological role, calcium-binding protein which may have a role in calcium homeostasis. Acts as a non-receptor guanine nucleotide exchange factor which binds to and activates guanine nucleotide-binding protein (G-protein) alpha subunit GNAI3. Anorexigenic peptide, seems to play an important role in hypothalamic pathways regulating food intake and energy homeostasis, acting in a leptin-independent manner. May also exert hypertensive roles and modulate blood pressure through directly acting on peripheral arterial resistance. In intestinal epithelial cells, plays a role in the inhibition of hepatic glucose production via MC4R receptor leading to increased cyclic adenosine monophosphate (cAMP) levels and glucagon-like peptide 1 (GLP-1) secretion. In Mus musculus (Mouse), this protein is Nucleobindin-2 (Nucb2).